The sequence spans 124 residues: Small ribosomal subunit protein uS12 (124 aa).

D89 carries the post-translational modification 3-methylthioaspartic acid.

This sequence belongs to the universal ribosomal protein uS12 family. In terms of assembly, part of the 30S ribosomal subunit. Contacts proteins S8 and S17. May interact with IF1 in the 30S initiation complex.

In terms of biological role, with S4 and S5 plays an important role in translational accuracy. Interacts with and stabilizes bases of the 16S rRNA that are involved in tRNA selection in the A site and with the mRNA backbone. Located at the interface of the 30S and 50S subunits, it traverses the body of the 30S subunit contacting proteins on the other side and probably holding the rRNA structure together. The combined cluster of proteins S8, S12 and S17 appears to hold together the shoulder and platform of the 30S subunit. The sequence is that of Small ribosomal subunit protein uS12 from Yersinia pestis (strain Pestoides F).